We begin with the raw amino-acid sequence, 314 residues long: Olfactory receptor 5P81 (314 aa).

The Extracellular portion of the chain corresponds to 1–28 (MAFLEDGNHTVVTEFILLGLTDDPVLRV). Asn-8 carries N-linked (GlcNAc...) asparagine glycosylation. Residues 29 to 49 (ILFIIILCIYLVTVSGNLSTI) form a helical membrane-spanning segment. Residues 50–57 (LLIRVSSQ) lie on the Cytoplasmic side of the membrane. The chain crosses the membrane as a helical span at residues 58–78 (LHHPMYFFLSHLASIDIAISS). The Extracellular portion of the chain corresponds to 79–102 (SVTPNMVVNFLVERSSISYIGCGI). Cys-100 and Cys-192 are disulfide-bonded. Residues 103–123 (QLGSAVFFGAIECFLLAVMAY) traverse the membrane as a helical segment. Residues 124 to 136 (DRFVAICNPLLYS) are Cytoplasmic-facing. A helical transmembrane segment spans residues 137 to 157 (TKMSKQVCIQLLVGSYIGGFI). At 158 to 199 (HASFFTLSFVSFLFCGPNRINHFFCDFTPLVELSCSDNSVLI) the chain is on the extracellular side. The helical transmembrane segment at 200 to 220 (ILDSFSTGTIIVITVFVIAIS) threads the bilayer. Topologically, residues 221–240 (YTCILITILKMHSTEGRHKA) are cytoplasmic. A helical transmembrane segment spans residues 241-261 (FSTCTSHLTVVTLLYGTVTFI). Topologically, residues 262–274 (YVMPKSSYSTDQN) are extracellular. The chain crosses the membrane as a helical span at residues 275 to 295 (KVISVFYMVVIPMLNPIIYSL). The Cytoplasmic segment spans residues 296–314 (RNNEIKGALKKQLGEKNIF).

The protein belongs to the G-protein coupled receptor 1 family.

Its subcellular location is the cell membrane. In terms of biological role, potential odorant receptor. This chain is Olfactory receptor 5P81, found in Mus musculus (Mouse).